The primary structure comprises 94 residues: Large ribosomal subunit protein bL25 (94 aa).

This sequence belongs to the bacterial ribosomal protein bL25 family. As to quaternary structure, part of the 50S ribosomal subunit; part of the 5S rRNA/L5/L18/L25 subcomplex. Contacts the 5S rRNA. Binds to the 5S rRNA independently of L5 and L18.

This is one of the proteins that binds to the 5S RNA in the ribosome where it forms part of the central protuberance. The polypeptide is Large ribosomal subunit protein bL25 (Salmonella gallinarum (strain 287/91 / NCTC 13346)).